A 90-amino-acid polypeptide reads, in one-letter code: MAQVLVIVRVLPEDVETPLDELRKRIAGALPEGYELKMWDEEPIAFGLKALRLAIIMPEQTEGGTETLENLISQVQGVSQVEVEYVNRLS.

The protein belongs to the EF-1-beta/EF-1-delta family.

Promotes the exchange of GDP for GTP in EF-1-alpha/GDP, thus allowing the regeneration of EF-1-alpha/GTP that could then be used to form the ternary complex EF-1-alpha/GTP/AAtRNA. This is Elongation factor 1-beta from Desulfurococcus amylolyticus (strain DSM 18924 / JCM 16383 / VKM B-2413 / 1221n) (Desulfurococcus kamchatkensis).